A 97-amino-acid polypeptide reads, in one-letter code: Large ribosomal subunit protein uL23 (97 aa).

It belongs to the universal ribosomal protein uL23 family. As to quaternary structure, part of the 50S ribosomal subunit. Contacts protein L29, and trigger factor when it is bound to the ribosome.

One of the early assembly proteins it binds 23S rRNA. One of the proteins that surrounds the polypeptide exit tunnel on the outside of the ribosome. Forms the main docking site for trigger factor binding to the ribosome. The polypeptide is Large ribosomal subunit protein uL23 (Brucella melitensis biotype 2 (strain ATCC 23457)).